The chain runs to 214 residues: Probable septum site-determining protein MinC (214 aa).

Belongs to the MinC family. In terms of assembly, interacts with MinD and FtsZ.

Its function is as follows. Cell division inhibitor that blocks the formation of polar Z ring septums. Rapidly oscillates between the poles of the cell to destabilize FtsZ filaments that have formed before they mature into polar Z rings. Prevents FtsZ polymerization. The protein is Probable septum site-determining protein MinC of Thermoanaerobacter pseudethanolicus (strain ATCC 33223 / 39E) (Clostridium thermohydrosulfuricum).